A 126-amino-acid polypeptide reads, in one-letter code: FCS-Like Zinc finger 7 (126 aa).

An FLZ-type zinc finger spans residues 72–116 (SFLVNCGFCKRGLAPGRDIYMYKGDAAFCSIECREQQMEHDEGKT).

Belongs to the FLZ family. In terms of assembly, interacts with KIN10 and KIN11 via its FLZ-type zinc finger domain. Interacts with KINB3 via its N-terminal part. Forms homodimer and heterodimer with FLZ1, FLZ2 and FLZ15 in vitro.

The protein localises to the cytoplasm. The protein resides in the nucleus. May act as an adapter to facilitate the interaction of SnRK1 complex with effector proteins, conferring tissue- and stimulus-type specific differences in the SnRK1 regulation pathway. The chain is FCS-Like Zinc finger 7 from Arabidopsis thaliana (Mouse-ear cress).